We begin with the raw amino-acid sequence, 209 residues long: Large ribosomal subunit protein uL3 (209 aa).

This sequence belongs to the universal ribosomal protein uL3 family. In terms of assembly, part of the 50S ribosomal subunit. Forms a cluster with proteins L14 and L19.

Functionally, one of the primary rRNA binding proteins, it binds directly near the 3'-end of the 23S rRNA, where it nucleates assembly of the 50S subunit. In Oceanobacillus iheyensis (strain DSM 14371 / CIP 107618 / JCM 11309 / KCTC 3954 / HTE831), this protein is Large ribosomal subunit protein uL3.